The sequence spans 154 residues: Ribonuclease H (154 aa).

One can recognise an RNase H type-1 domain in the interval 3–144 (ELPVVSIFTD…ADQLARDGVA (142 aa)). The Mg(2+) site is built by Asp12, Glu50, Asp72, and Asp136.

It belongs to the RNase H family. In terms of assembly, monomer. Mg(2+) is required as a cofactor.

The protein resides in the cytoplasm. The enzyme catalyses Endonucleolytic cleavage to 5'-phosphomonoester.. Functionally, endonuclease that specifically degrades the RNA of RNA-DNA hybrids. The protein is Ribonuclease H of Bradyrhizobium sp. (strain ORS 278).